The sequence spans 330 residues: MHNNNRIVITPGEPAGVGPDLVAALAQQDWPVELVVCADPALLLERARQLDLPLQLRTYQPQQPAQPQRAGTLTVLPVATAHPVVAGELNVGNSAYVVETLARACDGCLNGEFAALITGPVNKGVINDAGVPFIGHTEFFADRSGCDRVVMMLATEELRVALATTHLPLLAVPGAITRQSLHEVIRILDHDLKTKFGLAQPQIYVCGLNPHAGEGGHMGREEIDTIIPALDELRAEGITLIGPLPADTLFQPKYLQHADAVLAMYHDQGLPVLKYQGFGRAVNITLGLPFIRTSVDHGTALELAGTGTADAGSFKTALNLAIKMIINCNE.

The substrate site is built by His136 and Thr137. The a divalent metal cation site is built by His166, His211, and His266. Substrate is bound by residues Lys274, Asn283, and Arg292.

It belongs to the PdxA family. Homodimer. Zn(2+) serves as cofactor. Requires Mg(2+) as cofactor. It depends on Co(2+) as a cofactor.

Its subcellular location is the cytoplasm. It catalyses the reaction 4-(phosphooxy)-L-threonine + NAD(+) = 3-amino-2-oxopropyl phosphate + CO2 + NADH. It functions in the pathway cofactor biosynthesis; pyridoxine 5'-phosphate biosynthesis; pyridoxine 5'-phosphate from D-erythrose 4-phosphate: step 4/5. Functionally, catalyzes the NAD(P)-dependent oxidation of 4-(phosphooxy)-L-threonine (HTP) into 2-amino-3-oxo-4-(phosphooxy)butyric acid which spontaneously decarboxylates to form 3-amino-2-oxopropyl phosphate (AHAP). The chain is 4-hydroxythreonine-4-phosphate dehydrogenase from Serratia proteamaculans (strain 568).